Reading from the N-terminus, the 365-residue chain is Palmitoyltransferase ZDHHC20 (365 aa).

The Cytoplasmic segment spans residues 1–14 (MAPCTLWRCCQRTV). The chain crosses the membrane as a helical span at residues 15–35 (GWVPVLFITFVVVWSYYAYVV). The Lumenal portion of the chain corresponds to 36–53 (ELCVFTLSGNGENGKAVV). Residues 54–74 (YLVAFHLFFVMFVWSYWMTIF) form a helical membrane-spanning segment. Residues 75 to 169 (TSPASPSKEF…NNCVGFSNYK (95 aa)) lie on the Cytoplasmic side of the membrane. The DHHC domain maps to 126-176 (RYCERCQLIKPDRAHHCSACDMCILKMDHHCPWVNNCVGFSNYKFFLLFLF). The Zn(2+) site is built by Cys128 and Cys131. Substrate is bound by residues Lys135 and 140–143 (HHCS). Residues His141, Cys142, Cys145, Cys148, and His155 each coordinate Zn(2+). Catalysis depends on Cys156, which acts as the S-palmitoyl cysteine intermediate. Residue Cys162 coordinates Zn(2+). The chain crosses the membrane as a helical span at residues 170–190 (FFLLFLFYSLLYCLFVATTVL). The Lumenal portion of the chain corresponds to 191–207 (QYFIKFWTNELTDTRAK). Residues 208-231 (FHVLFLFFVSTMFFISVLSLLSYH) form a helical membrane-spanning segment. Over 232–365 (CWLVGKNRTT…NNHVTVAIEN (134 aa)) the chain is Cytoplasmic. Residues 301–365 (PEQASVSNQS…NNHVTVAIEN (65 aa)) form a disordered region. The segment covering 302-321 (EQASVSNQSESARSIGSNQP) has biased composition (polar residues). 2 positions are modified to phosphoserine: Ser305 and Ser330.

Belongs to the DHHC palmitoyltransferase family. In terms of processing, autopalmitoylated (in vitro).

It is found in the golgi apparatus membrane. The protein resides in the cell membrane. It localises to the cytoplasm. Its subcellular location is the perinuclear region. The protein localises to the endoplasmic reticulum membrane. It is found in the endoplasmic reticulum-Golgi intermediate compartment membrane. The catalysed reaction is L-cysteinyl-[protein] + hexadecanoyl-CoA = S-hexadecanoyl-L-cysteinyl-[protein] + CoA. The enzyme catalyses L-cysteinyl-[protein] + tetradecanoyl-CoA = S-tetradecanoyl-L-cysteinyl-[protein] + CoA. It catalyses the reaction L-cysteinyl-[protein] + octadecanoyl-CoA = S-octadecanoyl-L-cysteinyl-[protein] + CoA. Palmitoyltransferase that could catalyze the addition of palmitate onto various protein substrates. Catalyzes palmitoylation of Cys residues in the cytoplasmic C-terminus of EGFR, and modulates the duration of EGFR signaling by modulating palmitoylation-dependent EGFR internalization and degradation. Has a preference for acyl-CoA with C16 fatty acid chains. Can also utilize acyl-CoA with C14 and C18 fatty acid chains. May palmitoylate CALHM1 subunit of gustatory voltage-gated ion channels and modulate channel gating and kinetics. This Bos taurus (Bovine) protein is Palmitoyltransferase ZDHHC20.